We begin with the raw amino-acid sequence, 72 residues long: MSALFNFRSLLQVILLLICSCSYVHGQWPSLLDRYKNHEVLGAFWKMARVGERASPYVSLACILMAISQFNS.

The first 26 residues, 1-26 (MSALFNFRSLLQVILLLICSCSYVHG), serve as a signal peptide directing secretion. Topologically, residues 27–53 (QWPSLLDRYKNHEVLGAFWKMARVGER) are lumenal. A helical membrane pass occupies residues 54-72 (ASPYVSLACILMAISQFNS).

The protein belongs to the KISH family.

Its subcellular location is the endoplasmic reticulum membrane. The protein localises to the golgi apparatus membrane. Functionally, involved in the early part of the secretory pathway. The polypeptide is Protein Kish (Saccharomyces cerevisiae (strain ATCC 204508 / S288c) (Baker's yeast)).